Reading from the N-terminus, the 64-residue chain is Large ribosomal subunit protein bL35 (64 aa).

A disordered region spans residues 1–31 (MPKMKTHSGAKKRFKLTGTGKLKRQQANRRH).

It belongs to the bacterial ribosomal protein bL35 family.

The polypeptide is Large ribosomal subunit protein bL35 (Paenarthrobacter aurescens (strain TC1)).